Here is a 686-residue protein sequence, read N- to C-terminus: 3',5'-cyclic-AMP phosphodiesterase 4C (686 aa).

Residues serine 9, serine 28, serine 40, and serine 83 each carry the phosphoserine modification. Disordered regions lie at residues 88 to 116 and 124 to 143; these read NGLP…VHHV and YRSD…TSSA. Positions 124-133 are enriched in basic and acidic residues; it reads YRSDSDHEPS. Positions 313 to 642 constitute a PDEase domain; that stretch reads VQTDQEEQLA…EWYQSRIPCS (330 aa). The Proton donor role is filled by histidine 389. Histidine 389 contributes to the 3',5'-cyclic AMP binding site. 2 residues coordinate AMP: histidine 389 and histidine 393. Zn(2+) contacts are provided by histidine 393, histidine 429, aspartate 430, and aspartate 547. AMP is bound by residues aspartate 430, aspartate 547, glutamine 598, and phenylalanine 601. Aspartate 430 lines the Mg(2+) pocket. A Mn(2+)-binding site is contributed by aspartate 430. 3',5'-cyclic AMP contacts are provided by glutamine 598 and phenylalanine 601. Residue serine 642 is modified to Phosphoserine. Acidic residues predominate over residues 660–671; that stretch reads EAEEEEEEEDEG. Positions 660-686 are disordered; that stretch reads EAEEEEEEEDEGQCTALNRESSELPST. Polar residues predominate over residues 674–686; that stretch reads TALNRESSELPST.

It belongs to the cyclic nucleotide phosphodiesterase family. PDE4 subfamily. Part of a complex containing AKAP5, ADCY5, ADCY6 and PKD2. Requires Zn(2+) as cofactor. It depends on Mg(2+) as a cofactor. Mn(2+) serves as cofactor.

It is found in the cell projection. It localises to the cilium. The catalysed reaction is 3',5'-cyclic AMP + H2O = AMP + H(+). The protein operates within purine metabolism; 3',5'-cyclic AMP degradation; AMP from 3',5'-cyclic AMP: step 1/1. Functionally, hydrolyzes the second messenger cAMP, which is a key regulator of many important physiological processes. This is 3',5'-cyclic-AMP phosphodiesterase 4C from Mus musculus (Mouse).